A 182-amino-acid polypeptide reads, in one-letter code: Adenine phosphoribosyltransferase (182 aa).

The protein belongs to the purine/pyrimidine phosphoribosyltransferase family. In terms of assembly, homodimer.

It is found in the cytoplasm. It catalyses the reaction AMP + diphosphate = 5-phospho-alpha-D-ribose 1-diphosphate + adenine. It participates in purine metabolism; AMP biosynthesis via salvage pathway; AMP from adenine: step 1/1. Its function is as follows. Catalyzes a salvage reaction resulting in the formation of AMP, that is energically less costly than de novo synthesis. The protein is Adenine phosphoribosyltransferase of Renibacterium salmoninarum (strain ATCC 33209 / DSM 20767 / JCM 11484 / NBRC 15589 / NCIMB 2235).